A 242-amino-acid polypeptide reads, in one-letter code: Ribose-5-phosphate isomerase A (242 aa).

Residues 39-42 (SGST), 95-98 (DGAD), and 108-111 (KGGG) contribute to the substrate site. The active-site Proton acceptor is the Glu-117. Lys-135 serves as a coordination point for substrate.

The protein belongs to the ribose 5-phosphate isomerase family. As to quaternary structure, homodimer.

The catalysed reaction is aldehydo-D-ribose 5-phosphate = D-ribulose 5-phosphate. The protein operates within carbohydrate degradation; pentose phosphate pathway; D-ribose 5-phosphate from D-ribulose 5-phosphate (non-oxidative stage): step 1/1. Functionally, catalyzes the reversible conversion of ribose-5-phosphate to ribulose 5-phosphate. In Chlamydia trachomatis serovar D (strain ATCC VR-885 / DSM 19411 / UW-3/Cx), this protein is Ribose-5-phosphate isomerase A.